The primary structure comprises 500 residues: Aromatic-L-amino-acid decarboxylase (500 aa).

Pro102 is an L-tryptophan binding site. Ser168 lines the pyridoxal 5'-phosphate pocket. Residue His203 coordinates L-tryptophan. Residue Thr262 coordinates pyridoxal 5'-phosphate. His318 is an L-tryptophan binding site. Lys319 carries the N6-(pyridoxal phosphate)lysine modification. Tyr348 is a binding site for L-tryptophan.

It belongs to the group II decarboxylase family. As to quaternary structure, homodimer. Pyridoxal 5'-phosphate is required as a cofactor.

It carries out the reaction L-tryptophan + H(+) = tryptamine + CO2. It catalyses the reaction 5-hydroxy-L-tryptophan + H(+) = serotonin + CO2. Catalyzes the decarboxylation of L-tryptophan to tryptamine and L-5-hydroxytryptophan to serotonin, respectively. This chain is Aromatic-L-amino-acid decarboxylase, found in Catharanthus roseus (Madagascar periwinkle).